Reading from the N-terminus, the 1440-residue chain is Pentatricopeptide repeat-containing protein At3g18110, chloroplastic (1440 aa).

A chloroplast-targeting transit peptide spans 1 to 44 (MAVSAGALAFPALSVRATLNPEIKDEQANISSTTSSSQKFTYSR). Residues 63-72 (TPSQTLSSPV) are compositionally biased toward polar residues. The interval 63–84 (TPSQTLSSPVSPIAGTPDSGDV) is disordered. PPR repeat units lie at residues 224–258 (RVQVYNAMMGVYSRSGKFSKAQELVDAMRQRGCVP), 259–295 (DLISFNTLINARLKSGGLTPNLAVELLDMVRNSGLRP), 296–330 (DAITYNTLLSACSRDSNLDGAVKVFEDMEAHRCQP), 331–365 (DLWTYNAMISVYGRCGLAAEAERLFMELELKGFFP), 366–400 (DAVTYNSLLYAFARERNTEKVKEVYQQMQKMGFGK), 401–431 (DEMTYNTIIHMYGKQGQLDLALQLYKDMKGL), 437–471 (DAITYTVLIDSLGKANRTVEAAALMSEMLDVGIKP), 472–506 (TLQTYSALICGYAKAGKREEAEDTFSCMLRSGTKP), 507–541 (DNLAYSVMLDVLLRGNETRKAWGLYRDMISDGHTP), 542–572 (SYTLYELMILGLMKENRSDDIQKTIRDMEEL), 608–638 (ENDTLLSILGSYSSSGRHSEAFELLEFLKEH), 643–678 (KRLITEALIVLHCKVNNLSAALDEYFADPCVHGWCF), 680–714 (SSTMYETLLHCCVANEHYAEASQVFSDLRLSGCEA), 715–749 (SESVCKSMVVVYCKLGFPETAHQVVNQAETKGFHF), 751–785 (CSPMYTDIIEAYGKQKLWQKAESVVGNLRQSGRTP), 786–820 (DLKTWNSLMSAYAQCGCYERARAIFNTMMRDGPSP), 821–855 (TVESINILLHALCVDGRLEELYVVVEELQDMGFKI), 856–890 (SKSSILLMLDAFARAGNIFEVKKIYSSMKAAGYLP), 891–925 (TIRLYRMMIELLCKGKRVRDAEIMVSEMEEANFKV), 926–960 (ELAIWNSMLKMYTAIEDYKKTVQVYQRIKETGLEP), 961–995 (DETTYNTLIIMYCRDRRPEEGYLLMQQMRNLGLDP), 996–1030 (KLDTYKSLISAFGKQKCLEQAEQLFEELLSKGLKL), 1031–1065 (DRSFYHTMMKISRDSGSDSKAEKLLQMMKNAGIEP), 1066–1100 (TLATMHLLMVSYSSSGNPQEAEKVLSNLKDTEVEL), and 1101–1135 (TTLPYSSVIDAYLRSKDYNSGIERLLEMKKEGLEP). A disordered region spans residues 1419–1440 (KKKKMGNETNGINTRRKFVRSK).

Belongs to the PPR family. P subfamily.

Its subcellular location is the plastid. The protein resides in the chloroplast. In terms of biological role, may play a role in embryogenesis. The chain is Pentatricopeptide repeat-containing protein At3g18110, chloroplastic (EMB1270) from Arabidopsis thaliana (Mouse-ear cress).